The following is a 379-amino-acid chain: Alpha-humulene synthase eupE (379 aa).

This sequence belongs to the terpene synthase family. Alpha-humulene synthase eupE subfamily. The cofactor is Mg(2+).

It catalyses the reaction (2E,6E)-farnesyl diphosphate = alpha-humulene + diphosphate. The protein operates within secondary metabolite biosynthesis; terpenoid biosynthesis. Alpha-humulene synthase; part of the gene cluster that mediates the biosynthesis of eupenifeldin, a bistropolone meroterpenoid that acts as an antitumor agent. The first step of eupenifeldin biosynthesis is the biosynthesis of 3-methylorcinaldehyde performed by the non-reducing polyketide synthase eupA. Oxidative dearomatization of 3-methylorcinaldehyde likely catalyzed by the FAD-dependent monooxygenase eupB is followed by oxidative ring expansion by the 2-oxoglutarate-dependent dioxygenase eupC to provide the first tropolone metabolite, tropolone stipitaldehyde. In parallel, generation of sesquiterpene alpha-humulene from farnesylpyrophosphate (FPP) is catalyzed by the terpene cyclase eupE. The cytochrome P450 monooxygenase eupD then hydroxylates humulene to humulenol. The putative Diels-Alderase eupF probably catalyzes the formation of the tropolone-humulene skeleton by linking humulenol and the polyketide moiety. The short-chain dehydrogenase/reductase eupG and the flavin-dependent monooxygenase eupH are also essential for eupenifeldin biosynthesis and are likely the additional decorating enzymes of the tropolone-humulene skeleton to produce final eupenifeldin or derivatives. The chain is Alpha-humulene synthase eupE from Phoma sp.